A 276-amino-acid polypeptide reads, in one-letter code: RRP15-like protein (276 aa).

2 disordered regions span residues Met1–Val132 and Lys201–Glu276. 2 stretches are compositionally biased toward basic and acidic residues: residues Phe75–Val95 and Lys226–Thr245. A compositionally biased stretch (acidic residues) spans Glu254 to Glu276. At Ser269 the chain carries Phosphoserine. Tyr271 is modified (phosphotyrosine).

The protein belongs to the RRP15 family.

The sequence is that of RRP15-like protein from Drosophila melanogaster (Fruit fly).